The chain runs to 423 residues: T-box transcription factor T-A (423 aa).

The segment at residues 44–212 is a DNA-binding region (T-box); the sequence is LWTKFKELTN…HNPFAKAFLD (169 aa). Basic and acidic residues predominate over residues 215-227; the sequence is ERSDHKEVPDHST. Disordered stretches follow at residues 215–234 and 280–304; these read ERSD…QSGY and AAPY…SSGS. The segment covering 290–304 has biased composition (polar residues); sequence RSTTTNNYMDNSSGS.

As to quaternary structure, monomer. Binds DNA as a monomer. First expressed at the dorsal side of the blastula embryo. Expressed in the germ ring, shield and chordamesoderm during gastrulation and is restricted to the notochord and tailbud during somitogenesis (at protein level).

The protein resides in the nucleus. Involved in the transcriptional regulation of genes required for mesoderm differentiation, including itself. Indispensable for the formation of the notochord and the tail structure. Functions together with tbx16/spadetail in development of trunk and tail mesoderm. Functions by itself early in development to repress medial floor plate and promote notochord fate but at later times, functions together with tbx16/spadetail to promote medial floor plate formation. Acts in a parallel pathway to, but cooperates with, non-canonical wnt-signaling during tail formation. Required for the morphogenesis of Kupffer's vesicle and regulates left-right asymmetry. This chain is T-box transcription factor T-A (tbxta), found in Danio rerio (Zebrafish).